Reading from the N-terminus, the 110-residue chain is Chagasin (110 aa).

The BC loop signature appears at 29–34; it reads NPTTGF. Positions 59–68 match the DE loop motif; the sequence is PPDSKLLGAG. Positions 91–100 match the FG loop motif; sequence RPWTGPSHDS.

It belongs to the protease inhibitor I42 family. Interacts with cruzipain.

It is found in the flagellar pocket. The protein resides in the cytoplasmic vesicle. Its subcellular location is the cell surface. Cysteine protease inhibitor. Inhibits cysteine protease cruzipain. The protein is Chagasin (cha) of Trypanosoma cruzi.